Reading from the N-terminus, the 318-residue chain is Ribose-phosphate pyrophosphokinase 2 (318 aa).

96–101 (RQDKKD) lines the ATP pocket. Residues aspartate 128, histidine 130, aspartate 139, and aspartate 143 each contribute to the Mg(2+) site. Histidine 130 contacts ATP. Residues 212-227 (KDRVAILVDDMADTCG) are binding of phosphoribosylpyrophosphate.

This sequence belongs to the ribose-phosphate pyrophosphokinase family. Homodimer. The active form is probably a hexamer composed of 3 homodimers. The cofactor is Mg(2+).

It catalyses the reaction D-ribose 5-phosphate + ATP = 5-phospho-alpha-D-ribose 1-diphosphate + AMP + H(+). The protein operates within metabolic intermediate biosynthesis; 5-phospho-alpha-D-ribose 1-diphosphate biosynthesis; 5-phospho-alpha-D-ribose 1-diphosphate from D-ribose 5-phosphate (route I): step 1/1. Its activity is regulated as follows. Activated by magnesium and inorganic phosphate. Competitively or non-competitively inhibited by ADP, 2,3-bisphosphoglyceride or GDP. Catalyzes the synthesis of phosphoribosylpyrophosphate (PRPP) that is essential for nucleotide synthesis. The protein is Ribose-phosphate pyrophosphokinase 2 (Prps2) of Mus musculus (Mouse).